A 146-amino-acid chain; its full sequence is MTSSKKPSNSSAKNENLYAIAETSGQQFWFEVDKYYDIDRLNAKEKDKITIDKILLIKDKDNISLGQPYVKNAKIELEVVSHKRDKKIIVYKMRPKKKTRRKMGHRQELTRVMVKSISITNSTPKTSSKTEVKKKSTSPKASNPEN.

The interval 96–146 (KKKTRRKMGHRQELTRVMVKSISITNSTPKTSSKTEVKKKSTSPKASNPEN) is disordered.

The protein belongs to the bacterial ribosomal protein bL21 family. Part of the 50S ribosomal subunit. Contacts protein L20.

Functionally, this protein binds to 23S rRNA in the presence of protein L20. The protein is Large ribosomal subunit protein bL21 of Prochlorococcus marinus subsp. pastoris (strain CCMP1986 / NIES-2087 / MED4).